Consider the following 488-residue polypeptide: Bifunctional protein HldE (488 aa).

The tract at residues 1–330 is ribokinase; that stretch reads MDRKSIESIF…NAVALAHSDS (330 aa). Residue 205-208 coordinates ATP; the sequence is NRRE. The active site involves D275. The interval 356–488 is cytidylyltransferase; the sequence is FTNGCFDLLH…IIERVLERYS (133 aa).

The protein in the N-terminal section; belongs to the carbohydrate kinase PfkB family. This sequence in the C-terminal section; belongs to the cytidylyltransferase family. As to quaternary structure, homodimer.

It carries out the reaction D-glycero-beta-D-manno-heptose 7-phosphate + ATP = D-glycero-beta-D-manno-heptose 1,7-bisphosphate + ADP + H(+). It catalyses the reaction D-glycero-beta-D-manno-heptose 1-phosphate + ATP + H(+) = ADP-D-glycero-beta-D-manno-heptose + diphosphate. The protein operates within nucleotide-sugar biosynthesis; ADP-L-glycero-beta-D-manno-heptose biosynthesis; ADP-L-glycero-beta-D-manno-heptose from D-glycero-beta-D-manno-heptose 7-phosphate: step 1/4. It functions in the pathway nucleotide-sugar biosynthesis; ADP-L-glycero-beta-D-manno-heptose biosynthesis; ADP-L-glycero-beta-D-manno-heptose from D-glycero-beta-D-manno-heptose 7-phosphate: step 3/4. Catalyzes the phosphorylation of D-glycero-D-manno-heptose 7-phosphate at the C-1 position to selectively form D-glycero-beta-D-manno-heptose-1,7-bisphosphate. Its function is as follows. Catalyzes the ADP transfer from ATP to D-glycero-beta-D-manno-heptose 1-phosphate, yielding ADP-D-glycero-beta-D-manno-heptose. The protein is Bifunctional protein HldE of Pelobacter propionicus (strain DSM 2379 / NBRC 103807 / OttBd1).